A 29-amino-acid chain; its full sequence is Cytochrome b6-f complex subunit 8 (29 aa).

The chain crosses the membrane as a helical span at residues 3-23; sequence IVSLAWAALMVVFTFSLSLVV.

It belongs to the PetN family. As to quaternary structure, the 4 large subunits of the cytochrome b6-f complex are cytochrome b6, subunit IV (17 kDa polypeptide, PetD), cytochrome f and the Rieske protein, while the 4 small subunits are PetG, PetL, PetM and PetN. The complex functions as a dimer.

The protein localises to the plastid. It localises to the chloroplast thylakoid membrane. Its function is as follows. Component of the cytochrome b6-f complex, which mediates electron transfer between photosystem II (PSII) and photosystem I (PSI), cyclic electron flow around PSI, and state transitions. The chain is Cytochrome b6-f complex subunit 8 from Solanum bulbocastanum (Wild potato).